The chain runs to 278 residues: Ethanolamine utilization protein EutJ (278 aa).

It belongs to the EutJ family.

It functions in the pathway amine and polyamine degradation; ethanolamine degradation. Functionally, may protect ethanolamine ammonia-lyase (EAL, eutB-eutC) from inhibition, may function in assembling the bacterial microcompartment and/or in refolding EAL, suggesting it may have chaperone activity. This is Ethanolamine utilization protein EutJ (eutJ) from Escherichia coli (strain K12).